The sequence spans 309 residues: Homoserine O-succinyltransferase (309 aa).

Cys142 acts as the Acyl-thioester intermediate in catalysis. The substrate site is built by Lys163 and Ser192. The active-site Proton acceptor is the His235. Residue Glu237 is part of the active site. Residue Arg249 participates in substrate binding.

The protein belongs to the MetA family.

Its subcellular location is the cytoplasm. It catalyses the reaction L-homoserine + succinyl-CoA = O-succinyl-L-homoserine + CoA. It functions in the pathway amino-acid biosynthesis; L-methionine biosynthesis via de novo pathway; O-succinyl-L-homoserine from L-homoserine: step 1/1. In terms of biological role, transfers a succinyl group from succinyl-CoA to L-homoserine, forming succinyl-L-homoserine. In Yersinia pseudotuberculosis serotype O:1b (strain IP 31758), this protein is Homoserine O-succinyltransferase.